The primary structure comprises 205 residues: uncharacterized protein (205 aa).

An HTH tetR-type domain is found at 11–71; sequence DKRQAEILEA…RIIETGLDEG (61 aa). A DNA-binding region (H-T-H motif) is located at residues 34 to 53; it reads TMKDVVEESGFSRGGVYLYF.

This is an uncharacterized protein from Bacillus subtilis (strain 168).